The sequence spans 245 residues: Homeobox protein Hox-A4a (245 aa).

The tract at residues 34–99 (DYYERPKDPG…HGPRLTTESC (66 aa)) is disordered. Positions 35–51 (YYERPKDPGFPHHEEAS) are enriched in basic and acidic residues. Polar residues-rich tracts occupy residues 53–73 (PRSNYQEQSYDYGNVSTNDLN) and 82–99 (QPQSVSQNHGPRLTTESC). The short motif at 126–131 (VYPWMK) is the Antp-type hexapeptide element. A DNA-binding region (homeobox) is located at residues 147–206 (PKRSRTAYTRQQALELEKEFHFNRYLTRRRRVEIAHTMCLSERQVKIWFQNRRMKWKKDH). The interval 205 to 245 (DHKLPNTKIRSSSSAPSNHHVKTDATQQQQTLLPTPCSSNL) is disordered. The segment covering 212–221 (KIRSSSSAPS) has biased composition (polar residues). Residues 230–245 (TQQQQTLLPTPCSSNL) are compositionally biased toward low complexity.

This sequence belongs to the Antp homeobox family. Deformed subfamily.

Its subcellular location is the nucleus. Sequence-specific transcription factor which is part of a developmental regulatory system that provides cells with specific positional identities on the anterior-posterior axis. This is Homeobox protein Hox-A4a (hoxa4a) from Danio rerio (Zebrafish).